Here is a 434-residue protein sequence, read N- to C-terminus: Na(+)/H(+) antiporter NhaA 1 (434 aa).

The segment covering 1–15 (MISPNPALPTPPHAP) has biased composition (pro residues). The segment at 1–21 (MISPNPALPTPPHAPTAPGRG) is disordered. Transmembrane regions (helical) follow at residues 34–54 (GGIL…SPAA), 74–94 (LSVS…VVGL), 112–132 (ALPI…FTLI), 143–163 (GWAI…AVVG), 173–193 (FLLT…AVFY), 196–216 (GIAF…GILV), 222–242 (AWYV…ASGI), 245–265 (TIAG…RAGV), 294–314 (IAVP…LEGL), 326–346 (IIVA…LLVA), 362–382 (VLGL…VGEL), and 393–413 (AVKV…GTLL).

This sequence belongs to the NhaA Na(+)/H(+) (TC 2.A.33) antiporter family.

It localises to the cell membrane. It carries out the reaction Na(+)(in) + 2 H(+)(out) = Na(+)(out) + 2 H(+)(in). Its function is as follows. Na(+)/H(+) antiporter that extrudes sodium in exchange for external protons. This chain is Na(+)/H(+) antiporter NhaA 1, found in Clavibacter michiganensis subsp. michiganensis (strain NCPPB 382).